Consider the following 750-residue polypeptide: Polyribonucleotide nucleotidyltransferase (750 aa).

Residues aspartate 519 and aspartate 525 each contribute to the Mg(2+) site. Residues 585-644 (PRVIAVKIPVDKIGEVIGPKGKMINQIQEDTGADISIEDDGTVYIGATNGPSADAARSAI) form the KH domain. The 73-residue stretch at 656–728 (GERYLGTVVK…DRGKLSLSPV (73 aa)) folds into the S1 motif domain. The disordered stretch occupies residues 725–750 (LSPVVAEEEGAASEDAPAEAAEESAE). Positions 730-750 (AEEEGAASEDAPAEAAEESAE) are enriched in acidic residues.

The protein belongs to the polyribonucleotide nucleotidyltransferase family. It depends on Mg(2+) as a cofactor.

It is found in the cytoplasm. The catalysed reaction is RNA(n+1) + phosphate = RNA(n) + a ribonucleoside 5'-diphosphate. In terms of biological role, involved in mRNA degradation. Catalyzes the phosphorolysis of single-stranded polyribonucleotides processively in the 3'- to 5'-direction. This Paenarthrobacter aurescens (strain TC1) protein is Polyribonucleotide nucleotidyltransferase.